Reading from the N-terminus, the 252-residue chain is MNNLQLEALLNETLSPQLIKDYCPNGLQVEGKVEVKRIVTGVTASMALIEAAIELKADALLVHHGYFWKNEPEAIRGMKGRRIRTLIQNDLNLYAYHLPLDIHPQLGNNAQLAQRLGICVDGGLEGHPQSVAMFGHFLQPLTGEELAHRIGQVLNRTPLHIAPDQADKLIETVGWCTGGGQDYIELAASRGLDAFISGEISERTTYSAREQSIHYFSAGHHATERYGIKALGEWLAENHGFDVTFIDIDNPV.

Residues H63, H64, D101, H220, and E224 each contribute to the a divalent metal cation site.

It belongs to the GTP cyclohydrolase I type 2/NIF3 family. Homohexamer.

The polypeptide is GTP cyclohydrolase 1 type 2 homolog (Vibrio cholerae serotype O1 (strain ATCC 39315 / El Tor Inaba N16961)).